A 367-amino-acid chain; its full sequence is Ribosomal lysine N-methyltransferase 5 (367 aa).

Residues 55-74 form a disordered region; the sequence is EGGRKKKRVRRRNKASSVEE. The segment covering 58–68 has biased composition (basic residues); that stretch reads RKKKRVRRRNK. Residues W110, 170 to 172, D192, W256, and M288 contribute to the S-adenosyl-L-methionine site; that span reads GAG.

This sequence belongs to the class I-like SAM-binding methyltransferase superfamily. RKM5 family.

Its function is as follows. S-adenosyl-L-methionine-dependent protein-lysine N-methyltransferase that monomethylates 60S ribosomal protein L1 (RPL1A and RPL1B) at 'Lys-46'. The polypeptide is Ribosomal lysine N-methyltransferase 5 (RKM5) (Saccharomyces cerevisiae (strain AWRI796) (Baker's yeast)).